The chain runs to 501 residues: UDP-N-acetylmuramoyl-L-alanyl-D-glutamate--2,6-diaminopimelate ligase (501 aa).

Position 29 (Ser29) interacts with UDP-N-acetyl-alpha-D-muramoyl-L-alanyl-D-glutamate. Residue 112 to 118 coordinates ATP; sequence GTNGKTS. UDP-N-acetyl-alpha-D-muramoyl-L-alanyl-D-glutamate contacts are provided by residues 161 to 162, Ser188, and Arg196; that span reads TT. Residue Lys228 is modified to N6-carboxylysine. Residues Arg393, 417–420, Gly468, and Glu472 each bind meso-2,6-diaminopimelate; that span reads DNPR. Residues 417–420 carry the Meso-diaminopimelate recognition motif motif; that stretch reads DNPR.

This sequence belongs to the MurCDEF family. MurE subfamily. It depends on Mg(2+) as a cofactor. In terms of processing, carboxylation is probably crucial for Mg(2+) binding and, consequently, for the gamma-phosphate positioning of ATP.

It localises to the cytoplasm. It catalyses the reaction UDP-N-acetyl-alpha-D-muramoyl-L-alanyl-D-glutamate + meso-2,6-diaminopimelate + ATP = UDP-N-acetyl-alpha-D-muramoyl-L-alanyl-gamma-D-glutamyl-meso-2,6-diaminopimelate + ADP + phosphate + H(+). It functions in the pathway cell wall biogenesis; peptidoglycan biosynthesis. Its function is as follows. Catalyzes the addition of meso-diaminopimelic acid to the nucleotide precursor UDP-N-acetylmuramoyl-L-alanyl-D-glutamate (UMAG) in the biosynthesis of bacterial cell-wall peptidoglycan. In Acidovorax sp. (strain JS42), this protein is UDP-N-acetylmuramoyl-L-alanyl-D-glutamate--2,6-diaminopimelate ligase.